A 109-amino-acid chain; its full sequence is Protein reprimo (109 aa).

Residues Asn-7 and Asn-18 are each glycosylated (N-linked (GlcNAc...) asparagine). The helical transmembrane segment at 56 to 76 (VVQIAVMCVLSLTVVFGIFFL) threads the bilayer. Phosphoserine is present on Ser-98.

The protein belongs to the reprimo family.

It localises to the cytoplasm. Its subcellular location is the membrane. Its function is as follows. May be involved in the regulation of p53-dependent G2 arrest of the cell cycle. Seems to induce cell cycle arrest by inhibiting CDK1 activity and nuclear translocation of the CDC2 cyclin B1 complex. In Mus musculus (Mouse), this protein is Protein reprimo (Rprm).